The following is a 269-amino-acid chain: Shikimate dehydrogenase (NADP(+)) (269 aa).

Residues 17 to 19 (SKS) and Thr-64 contribute to the shikimate site. Catalysis depends on Lys-68, which acts as the Proton acceptor. Asp-80 contributes to the NADP(+) binding site. Asn-89 and Asp-105 together coordinate shikimate. NADP(+) contacts are provided by residues 130–134 (GAGGA), 154–159 (NRTRAK), and Met-213. Tyr-215 is a binding site for shikimate. An NADP(+)-binding site is contributed by Gly-237.

The protein belongs to the shikimate dehydrogenase family. In terms of assembly, homodimer.

The catalysed reaction is shikimate + NADP(+) = 3-dehydroshikimate + NADPH + H(+). The protein operates within metabolic intermediate biosynthesis; chorismate biosynthesis; chorismate from D-erythrose 4-phosphate and phosphoenolpyruvate: step 4/7. Functionally, involved in the biosynthesis of the chorismate, which leads to the biosynthesis of aromatic amino acids. Catalyzes the reversible NADPH linked reduction of 3-dehydroshikimate (DHSA) to yield shikimate (SA). The chain is Shikimate dehydrogenase (NADP(+)) from Neisseria meningitidis serogroup C (strain 053442).